Here is a 628-residue protein sequence, read N- to C-terminus: ATP-binding cassette sub-family F member 2 (628 aa).

A disordered region spans residues 1-57 (MPSDLAKKKAAKKKEAAKARQRPRKGHEENGDAVTEPQVAEEKIEEANGRETTGDGE). Residues 40 to 53 (AEEKIEEANGRETT) are compositionally biased toward basic and acidic residues. 2 ABC transporter domains span residues 91–330 (VHII…ENQM) and 401–618 (IMVQ…VDEE). ATP is bound at residue 123 to 130 (GLNGIGKS). Thr223 is subject to Phosphothreonine. The residue at position 309 (Lys309) is an N6-acetyllysine. Residue 435-442 (GPNGAGKS) coordinates ATP. Phosphoserine is present on Ser517.

Belongs to the ABC transporter superfamily. ABCF family. EF3 subfamily.

The sequence is that of ATP-binding cassette sub-family F member 2 from Mus musculus (Mouse).